Consider the following 288-residue polypeptide: Release factor glutamine methyltransferase (288 aa).

S-adenosyl-L-methionine-binding positions include 123–127 (GTGSG), D146, and N190. Residue 190 to 193 (NPPY) coordinates substrate.

Belongs to the protein N5-glutamine methyltransferase family. PrmC subfamily.

The enzyme catalyses L-glutaminyl-[peptide chain release factor] + S-adenosyl-L-methionine = N(5)-methyl-L-glutaminyl-[peptide chain release factor] + S-adenosyl-L-homocysteine + H(+). In terms of biological role, methylates the class 1 translation termination release factors RF1/PrfA and RF2/PrfB on the glutamine residue of the universally conserved GGQ motif. The protein is Release factor glutamine methyltransferase of Bacillus subtilis (strain 168).